An 826-amino-acid chain; its full sequence is 1,4-alpha-glucan-branching enzyme 1, chloroplastic/amyloplastic (826 aa).

The N-terminal 58 residues, 1 to 58 (ATTTTTTHNSKNKQYLAKQKPVELTLGYQNPNGCKVCSFGSKGSIYQKVSSGFKGVSV), are a transit peptide targeting the chloroplast. Asp409 (nucleophile) is an active-site residue. Glu464 (proton donor) is an active-site residue. Residues 782–813 (DTDVARIPDVSMESEDSNLDRIEDNSEDAVDA) are disordered.

The protein belongs to the glycosyl hydrolase 13 family. GlgB subfamily. As to quaternary structure, monomer. As to expression, expressed in roots, leaves, stipules, pods and flowers.

Its subcellular location is the plastid. It localises to the chloroplast. It is found in the amyloplast. It carries out the reaction Transfers a segment of a (1-&gt;4)-alpha-D-glucan chain to a primary hydroxy group in a similar glucan chain.. The protein operates within glycan biosynthesis; starch biosynthesis. Its function is as follows. Catalyzes the formation of the alpha-1,6-glucosidic linkages in starch by scission of a 1,4-alpha-linked oligosaccharide from growing alpha-1,4-glucan chains and the subsequent attachment of the oligosaccharide to the alpha-1,6 position. May preferentially transfer long chains during branching. In Pisum sativum (Garden pea), this protein is 1,4-alpha-glucan-branching enzyme 1, chloroplastic/amyloplastic (SBEII).